A 307-amino-acid chain; its full sequence is Bidirectional sugar transporter SWEET11 (307 aa).

Topologically, residues 1–14 are extracellular; that stretch reads MAGGFLSMANPAVT. The helical transmembrane segment at 15-35 threads the bilayer; it reads LSGVAGNIISFLVFLAPVATF. One can recognise a MtN3/slv 1 domain in the interval 17–100; that stretch reads GVAGNIISFL…VLYLVYAPRR (84 aa). At 36–47 the chain is on the cytoplasmic side; sequence LQVYKKKSTGGY. Residues 48-68 form a helical membrane-spanning segment; the sequence is SSVPYVVALFSSVLWIFYALV. Over 69 to 74 the chain is Extracellular; the sequence is KTNSRP. A helical membrane pass occupies residues 75–95; sequence LLTINAFGCGVEAAYIVLYLV. Residues 96–107 are Cytoplasmic-facing; it reads YAPRRARLRTLA. The helical transmembrane segment at 108-128 threads the bilayer; the sequence is FFLLLDVAAFALIVVTTLYLV. Residues 129 to 135 lie on the Extracellular side of the membrane; it reads PKPHQVK. The helical transmembrane segment at 136 to 156 threads the bilayer; sequence FLGSVCLAFSMAVFVAPLSII. The 84-residue stretch at 136 to 219 folds into the MtN3/slv 2 domain; the sequence is FLGSVCLAFS…MGLYFWYRKP (84 aa). Residues 157–168 lie on the Cytoplasmic side of the membrane; the sequence is FKVIKTKSVEFM. The chain crosses the membrane as a helical span at residues 169 to 189; sequence PIGLSVCLTLSAVAWFCYGLF. Residues 190-194 are Extracellular-facing; that stretch reads TKDPY. The chain crosses the membrane as a helical span at residues 195 to 215; sequence VMYPNVGGFFFSCVQMGLYFW. Residues 216–307 lie on the Cytoplasmic side of the membrane; that stretch reads YRKPRNTAVL…PEVIEITAAV (92 aa).

The protein belongs to the SWEET sugar transporter family. As to quaternary structure, interacts with COPT1 and COPT2. Interacts with APX8. In terms of tissue distribution, mostly expressed in panicles and anthers. Also detected in leaves (leaf collar, leaf auricle, leaf ligule), roots, sheaths, culms and culm nodes.

It localises to the cell membrane. Its function is as follows. Mediates both low-affinity uptake and efflux of sugar across the plasma membrane. Required for pollen viability. Involved in the transport of copper, in cooperation with COPT1 and COPT2. Functionally, confers sensitivity to bacterial blight mediated by X.oryzae pv. oryzae (Xoo) in its Xa13 allelic form (e.g. cv. IR24), probably by providing the sugar required for the pathogen growth, or by reducing copper contents in xylem. However, a recessive resistance can be associated with the xa13 allele (in which the promoter is mutated leading to reduced induction upon pathogen infection, e.g. cv. IRBB13), specifically toward Xoo Philippine race 6 and Indian race PXO8. The polypeptide is Bidirectional sugar transporter SWEET11 (SWEET11) (Oryza sativa subsp. japonica (Rice)).